The chain runs to 363 residues: MTRTVLLRALTKNKFVASNAPRSISISITSLSRCISTLILAEHESGTIKPQTVSTVVAANSLGESSSISLLLAGSGSSLQEAASQAASCHPSVSEVLVADSDKFEYSLAEPWAKLVDFVRQQGDYSHILASSSSFGKNILPRVAALLDVSPITDVVKILGSDQFIRPIYAGNALCTVRYTGAGPCMLTIRSTSFPVTPITANSESKKATVSQIDLSNFEDDSVSKSRYVGRSTQDTERPDLGSARVVITGGRALKSVENFKMIEKLAEKLGGAVGATRAAVDAGYVPNDLQVGQTGKIVAPELYMAFGVSGAIQHLAGIKDSKVIVAVNKDADAPIFQVADYGLVGDLFEVIPELLEKLPEKK.

Residues 1-24 constitute a mitochondrion transit peptide; that stretch reads MTRTVLLRALTKNKFVASNAPRSI. An FAD-binding site is contributed by 303-331; the sequence is LYMAFGVSGAIQHLAGIKDSKVIVAVNKD.

It belongs to the ETF alpha-subunit/FixB family. As to quaternary structure, heterodimer of an alpha and a beta subunit. Requires FAD as cofactor.

It localises to the mitochondrion matrix. The electron transfer flavoprotein serves as a specific electron acceptor for several dehydrogenases, including five acyl-CoA dehydrogenases, glutaryl-CoA and sarcosine dehydrogenase. It transfers the electrons to the main mitochondrial respiratory chain via ETF-ubiquinone oxidoreductase (ETF dehydrogenase). Involved in leucine catabolism and in phytol degradation. The protein is Electron transfer flavoprotein subunit alpha, mitochondrial (ETFA) of Arabidopsis thaliana (Mouse-ear cress).